Here is a 557-residue protein sequence, read N- to C-terminus: MEGSEDASAIVEPPDPEVLEIDPTCRYIRYKEVIGKGASKTVFKGFDEVDGIEVAWNQVRIDDLLQSPDCLERLYSEVRLLKSLKHKNIIRFYNSWIDDKNKTVNIITELFTSGSLRQYRKKHRKVNMKAVKCWARQILTGLKYLHSQDPPIIHRDIKCDNIFINGNHGEVKIGDLGLATVMEQANAKSVIGTPEFMAPELYDENYNELADIYSFGMCMLEMVTFEYPYCECRNSAQIYKKVSSGIKPASLSKVKDPEVMKFIEKCLLPASERLSAEELLLDSFLNVNGLVMNNPLPLPDIVMPKEGSFGERCLMSEGPPNARNRTMSMNLDEDNNLPIVISSNNSGTNCIEVRRAKRGNFFVLKGEENDENSVSLILRIVDENGRVRNIHFLFFQEGDTASNVSSEMVEQLELTDKNVKFIAELIDVLLVNLIPNWKTDVAVDHLIHPQQNQSSKDNHQNGASSQAGESISHSLSSDYCPRSDDEANPTVAATTEDQEAEKPGSLEEEEEDERLKEELEKIEERFREEMKEITRKREEATMETKNRFFEKKMQQVE.

The Protein kinase domain maps to 28 to 285 (IRYKEVIGKG…AEELLLDSFL (258 aa)). Residues 108-111 (TELF) and lysine 158 each bind ATP. Aspartate 175 functions as the Proton acceptor in the catalytic mechanism. Residues 451 to 477 (QNQSSKDNHQNGASSQAGESISHSLSS) are compositionally biased toward polar residues. The disordered stretch occupies residues 451–517 (QNQSSKDNHQ…EEEEDERLKE (67 aa)). Serine 505 carries the post-translational modification Phosphoserine.

It belongs to the protein kinase superfamily. Ser/Thr protein kinase family. WNK subfamily.

It catalyses the reaction L-seryl-[protein] + ATP = O-phospho-L-seryl-[protein] + ADP + H(+). The enzyme catalyses L-threonyl-[protein] + ATP = O-phospho-L-threonyl-[protein] + ADP + H(+). In terms of biological role, may regulate flowering time by modulating the photoperiod pathway. The protein is Probable serine/threonine-protein kinase WNK7 (WNK7) of Arabidopsis thaliana (Mouse-ear cress).